Reading from the N-terminus, the 214-residue chain is Adenylate kinase (214 aa).

Residue 10 to 15 (GAGKGT) coordinates ATP. Positions 30-59 (STGDMFRDHKARGTEIGKQVQAIMDAGGLV) are NMP. AMP-binding positions include threonine 31, arginine 36, 57-59 (GLV), 85-88 (GYPR), and glutamine 92. An LID region spans residues 126–163 (GRRSCPRCGAVYHVSQNPPHRAGFCDRDDAALVQREDD). Residue arginine 127 participates in ATP binding. Zn(2+)-binding residues include cysteine 130 and cysteine 133. 136-137 (VY) contributes to the ATP binding site. Residues cysteine 150 and aspartate 153 each contribute to the Zn(2+) site. 2 residues coordinate AMP: arginine 160 and arginine 171. Glycine 199 provides a ligand contact to ATP.

This sequence belongs to the adenylate kinase family. Monomer.

It localises to the cytoplasm. The enzyme catalyses AMP + ATP = 2 ADP. The protein operates within purine metabolism; AMP biosynthesis via salvage pathway; AMP from ADP: step 1/1. Functionally, catalyzes the reversible transfer of the terminal phosphate group between ATP and AMP. Plays an important role in cellular energy homeostasis and in adenine nucleotide metabolism. This is Adenylate kinase from Anaeromyxobacter dehalogenans (strain 2CP-1 / ATCC BAA-258).